Consider the following 110-residue polypeptide: Secreted RxLR effector protein 89 (110 aa).

Residues 1 to 22 form the signal peptide; the sequence is MTSVVIVVSVAVLLGVLVITDS. N29 carries an N-linked (GlcNAc...) asparagine glycan. The RxLR-dEER signature appears at 61-74; that stretch reads RHLRTILQWWQERR.

This sequence belongs to the RxLR effector family.

It localises to the secreted. Its subcellular location is the host nucleus. It is found in the host cytoplasm. Its function is as follows. Secreted effector that completely suppresses the host cell death induced by cell death-inducing proteins. This Plasmopara viticola (Downy mildew of grapevine) protein is Secreted RxLR effector protein 89.